Here is a 462-residue protein sequence, read N- to C-terminus: Probable acid phosphatase SPBC4.06 (462 aa).

His35 acts as the Nucleophile in catalysis. Asp330 (proton donor) is an active-site residue.

This sequence belongs to the histidine acid phosphatase family.

Its subcellular location is the mitochondrion. The catalysed reaction is a phosphate monoester + H2O = an alcohol + phosphate. This is Probable acid phosphatase SPBC4.06 from Schizosaccharomyces pombe (strain 972 / ATCC 24843) (Fission yeast).